The primary structure comprises 226 residues: Cytidylate kinase (226 aa).

10–18 (GPASSGKST) contacts ATP.

Belongs to the cytidylate kinase family. Type 1 subfamily.

It is found in the cytoplasm. The enzyme catalyses CMP + ATP = CDP + ADP. It catalyses the reaction dCMP + ATP = dCDP + ADP. The protein is Cytidylate kinase of Streptococcus thermophilus (strain ATCC BAA-491 / LMD-9).